The chain runs to 575 residues: Thrombomodulin (575 aa).

An N-terminal signal peptide occupies residues 1-18 (MLGVLVLGALALAGLGFP). The Extracellular segment spans residues 19–515 (APAEPQPGGS…TPPAVGLVHS (497 aa)). One can recognise a C-type lectin domain in the interval 31-169 (VEHDCFALYP…VKADGFLCEF (139 aa)). N-linked (GlcNAc...) asparagine glycosylation is found at asparagine 47, asparagine 115, and asparagine 116. Disulfide bonds link cysteine 137–cysteine 158, cysteine 245–cysteine 256, cysteine 252–cysteine 265, cysteine 267–cysteine 280, cysteine 288–cysteine 296, cysteine 292–cysteine 308, cysteine 310–cysteine 323, cysteine 329–cysteine 340, cysteine 336–cysteine 349, cysteine 351–cysteine 362, cysteine 369–cysteine 378, cysteine 374–cysteine 388, cysteine 390–cysteine 404, cysteine 408–cysteine 413, cysteine 417–cysteine 425, cysteine 427–cysteine 439, cysteine 445–cysteine 455, cysteine 451–cysteine 464, and cysteine 466–cysteine 480. EGF-like domains lie at 241 to 281 (GAWD…RSCT) and 284 to 324 (ATQS…HRCE). One can recognise an EGF-like 3; calcium-binding domain in the interval 325–363 (DVDDCILEPSPCPQRCVNTQGGFECHCYPNYDLVDGECV). Position 342 is a (3R)-3-hydroxyasparagine (asparagine 342). EGF-like domains lie at 365-405 (PVDP…HRCQ) and 404-440 (CQMF…FICT). The N-linked (GlcNAc...) asparagine glycan is linked to asparagine 382. N-linked (GlcNAc...) asparagine glycosylation is present at asparagine 409. Residues 441–481 (DIDECENGGFCSGVCHNLPGTFECICGPDSALARHIGTDCD) form the EGF-like 6; calcium-binding domain. Residues 481–515 (DSGKVDGGDSGSGEPPPSPTPGSTLTPPAVGLVHS) form an involved in alpha-L/beta-2 and alpha-M/beta-2 integrin binding region. Residues 484-506 (KVDGGDSGSGEPPPSPTPGSTLT) are disordered. Serine 490 and serine 492 each carry an O-linked (Xyl...) (chondroitin sulfate) serine glycan. A helical membrane pass occupies residues 516–539 (GLLIGISIASLCLVVALLALLCHL). The Cytoplasmic portion of the chain corresponds to 540–575 (RKKQGAARAKMEYKCAAPSKEVVLQHVRTERTPQRL).

In terms of assembly, interacts with ITGAL, ITGAM and ITGB2. Interacts with thrombin/F2; this interaction switches the specificity of thrombin from a procoagulant to an anticoagulant and antifibrinolytic protease. Interacts with ANGP1 and ANGP2; these interactions significantly inhibit the generation of activated PC and TAFIa/CPB2 by the thrombin/thrombomodulin complex. Interacts with PF4; this interaction enhances generation of activated protein C. Interacts with HMGB1; this interaction inhibits HMGB1 inflammatory activity. In terms of processing, N-glycosylated. Post-translationally, the iron and 2-oxoglutarate dependent 3-hydroxylation of aspartate and asparagine is (R) stereospecific within EGF domains. In terms of tissue distribution, endothelial cells are unique in synthesizing thrombomodulin.

It is found in the membrane. In terms of biological role, endothelial cell receptor that plays a critical role in regulating several physiological processes including hemostasis, coagulation, fibrinolysis, inflammation, and angiogenesis. Acts as a cofactor for thrombin activation of protein C/PROC on the surface of vascular endothelial cells leading to initiation of the activated protein C anticoagulant pathway. Also accelerates the activation of the plasma carboxypeptidase B2/CPB2, which catalyzes removal of C-terminal basic amino acids from its substrates including kinins or anaphylatoxins leading to fibrinolysis inhibition. Plays critical protective roles in changing the cleavage specificity of protease-activated receptor 1/PAR1, inhibiting endothelial cell permeability and inflammation. Suppresses inflammation distinctly from its anticoagulant cofactor activity by sequestering HMGB1 thereby preventing it from engaging cellular receptors such as RAGE and contributing to the inflammatory response. The polypeptide is Thrombomodulin (THBD) (Homo sapiens (Human)).